Here is a 266-residue protein sequence, read N- to C-terminus: Dihydropteroate synthase (266 aa).

Positions 12 to 260 (AAIMGILNVT…DVKANQDIVA (249 aa)) constitute a Pterin-binding domain. A Mg(2+)-binding site is contributed by Asn-19. (7,8-dihydropterin-6-yl)methyl diphosphate contacts are provided by residues Thr-59, Asp-93, Asn-112, Asp-176, Lys-212, and 248–250 (RVH).

The protein belongs to the DHPS family. Homodimer or homotrimer. Mg(2+) is required as a cofactor.

It catalyses the reaction (7,8-dihydropterin-6-yl)methyl diphosphate + 4-aminobenzoate = 7,8-dihydropteroate + diphosphate. It functions in the pathway cofactor biosynthesis; tetrahydrofolate biosynthesis; 7,8-dihydrofolate from 2-amino-4-hydroxy-6-hydroxymethyl-7,8-dihydropteridine diphosphate and 4-aminobenzoate: step 1/2. Catalyzes the condensation of para-aminobenzoate (pABA) with 6-hydroxymethyl-7,8-dihydropterin diphosphate (DHPt-PP) to form 7,8-dihydropteroate (H2Pte), the immediate precursor of folate derivatives. The polypeptide is Dihydropteroate synthase (folP) (Streptococcus pyogenes serotype M3 (strain ATCC BAA-595 / MGAS315)).